Reading from the N-terminus, the 296-residue chain is Ribosomal protein L11 methyltransferase (296 aa).

T145, G166, D188, and N230 together coordinate S-adenosyl-L-methionine.

Belongs to the methyltransferase superfamily. PrmA family.

The protein resides in the cytoplasm. It catalyses the reaction L-lysyl-[protein] + 3 S-adenosyl-L-methionine = N(6),N(6),N(6)-trimethyl-L-lysyl-[protein] + 3 S-adenosyl-L-homocysteine + 3 H(+). Functionally, methylates ribosomal protein L11. The chain is Ribosomal protein L11 methyltransferase from Histophilus somni (strain 129Pt) (Haemophilus somnus).